The primary structure comprises 232 residues: Ribose-5-phosphate isomerase A (232 aa).

Substrate contacts are provided by residues 34–37 (TGST), 89–92 (DGAD), and 102–105 (KGGG). Glu-111 acts as the Proton acceptor in catalysis. Lys-129 provides a ligand contact to substrate.

The protein belongs to the ribose 5-phosphate isomerase family. In terms of assembly, homodimer.

It catalyses the reaction aldehydo-D-ribose 5-phosphate = D-ribulose 5-phosphate. It participates in carbohydrate degradation; pentose phosphate pathway; D-ribose 5-phosphate from D-ribulose 5-phosphate (non-oxidative stage): step 1/1. Its function is as follows. Catalyzes the reversible conversion of ribose-5-phosphate to ribulose 5-phosphate. The sequence is that of Ribose-5-phosphate isomerase A from Protochlamydia amoebophila (strain UWE25).